The primary structure comprises 189 residues: Transcription factor FapR (189 aa).

Belongs to the FapR family.

Transcriptional factor involved in regulation of membrane lipid biosynthesis by repressing genes involved in fatty acid and phospholipid metabolism. This Listeria welshimeri serovar 6b (strain ATCC 35897 / DSM 20650 / CCUG 15529 / CIP 8149 / NCTC 11857 / SLCC 5334 / V8) protein is Transcription factor FapR.